Consider the following 715-residue polypeptide: Polyribonucleotide nucleotidyltransferase (715 aa).

The Mg(2+) site is built by aspartate 493 and aspartate 499. Positions 560 to 619 (PRMITIKINPEKIRDVIGKGGSVIRALTEETGTTIDISDDGVVTIASTSSEGMAEAKKRI) constitute a KH domain. In terms of domain architecture, S1 motif spans 629 to 697 (GQVYEGTVLK…EKGRVRLSAK (69 aa)).

It belongs to the polyribonucleotide nucleotidyltransferase family. Requires Mg(2+) as cofactor.

The protein localises to the cytoplasm. It catalyses the reaction RNA(n+1) + phosphate = RNA(n) + a ribonucleoside 5'-diphosphate. Its function is as follows. Involved in mRNA degradation. Catalyzes the phosphorolysis of single-stranded polyribonucleotides processively in the 3'- to 5'-direction. In Burkholderia multivorans (strain ATCC 17616 / 249), this protein is Polyribonucleotide nucleotidyltransferase.